A 418-amino-acid chain; its full sequence is NADH-quinone oxidoreductase subunit D (418 aa).

Belongs to the complex I 49 kDa subunit family. NDH-1 is composed of 14 different subunits. Subunits NuoB, C, D, E, F, and G constitute the peripheral sector of the complex.

It localises to the cell inner membrane. The enzyme catalyses a quinone + NADH + 5 H(+)(in) = a quinol + NAD(+) + 4 H(+)(out). Functionally, NDH-1 shuttles electrons from NADH, via FMN and iron-sulfur (Fe-S) centers, to quinones in the respiratory chain. The immediate electron acceptor for the enzyme in this species is believed to be ubiquinone. Couples the redox reaction to proton translocation (for every two electrons transferred, four hydrogen ions are translocated across the cytoplasmic membrane), and thus conserves the redox energy in a proton gradient. The protein is NADH-quinone oxidoreductase subunit D of Bordetella pertussis (strain Tohama I / ATCC BAA-589 / NCTC 13251).